The following is a 273-amino-acid chain: DnaJ homolog subfamily C member 27-A (273 aa).

Residues 23 to 30 (GNAEVGKS), 71 to 75 (DMAGH), and 134 to 137 (NKID) contribute to the GTP site. The region spanning 217–273 (DSWDMLGVKPGATRDEVNKAYRKLAVLLHPDKCMAPGSEDAFKAVVNARTALLKNIK) is the J domain.

Belongs to the small GTPase superfamily. Rab family.

The protein localises to the nucleus. In terms of biological role, GTPase possibly involved in regulation of the MEK/ERK pathway. The sequence is that of DnaJ homolog subfamily C member 27-A (dnajc27-a) from Xenopus laevis (African clawed frog).